The sequence spans 253 residues: Ribosome-inactivating protein saporin-9 (253 aa).

Glu-176 is an active-site residue.

The enzyme catalyses Endohydrolysis of the N-glycosidic bond at one specific adenosine on the 28S rRNA.. In terms of biological role, ribosome-inactivating protein of type 1, inhibits protein synthesis in animal cells. The polypeptide is Ribosome-inactivating protein saporin-9 (SAP9) (Saponaria officinalis (Common soapwort)).